We begin with the raw amino-acid sequence, 593 residues long: Glutamate decarboxylase 1 (593 aa).

The segment covering M1 to S12 has biased composition (low complexity). Residues M1–N22 form a disordered region. Phosphoserine is present on S77. Residue Q189 to S191 participates in 4-aminobutanoate binding. Position 404 is an N6-(pyridoxal phosphate)lysine (K404). R566 contributes to the 4-aminobutanoate binding site.

Belongs to the group II decarboxylase family. As to quaternary structure, homodimer. It depends on pyridoxal 5'-phosphate as a cofactor.

It carries out the reaction L-glutamate + H(+) = 4-aminobutanoate + CO2. Functionally, catalyzes the synthesis of the inhibitory neurotransmitter gamma-aminobutyric acid (GABA) with pyridoxal 5'-phosphate as cofactor. This chain is Glutamate decarboxylase 1 (Gad1), found in Mus musculus (Mouse).